We begin with the raw amino-acid sequence, 387 residues long: 1-deoxy-D-xylulose 5-phosphate reductoisomerase (387 aa).

Positions 10, 11, 12, 13, 36, 37, and 124 each coordinate NADPH. 1-deoxy-D-xylulose 5-phosphate is bound at residue lysine 125. Glutamate 126 is an NADPH binding site. A Mn(2+)-binding site is contributed by aspartate 150. Serine 151, glutamate 152, serine 176, and histidine 199 together coordinate 1-deoxy-D-xylulose 5-phosphate. Glutamate 152 is a binding site for Mn(2+). Residue glycine 205 coordinates NADPH. 1-deoxy-D-xylulose 5-phosphate-binding residues include serine 212, asparagine 217, lysine 218, and glutamate 221. Glutamate 221 contributes to the Mn(2+) binding site.

This sequence belongs to the DXR family. Mg(2+) is required as a cofactor. It depends on Mn(2+) as a cofactor.

The enzyme catalyses 2-C-methyl-D-erythritol 4-phosphate + NADP(+) = 1-deoxy-D-xylulose 5-phosphate + NADPH + H(+). The protein operates within isoprenoid biosynthesis; isopentenyl diphosphate biosynthesis via DXP pathway; isopentenyl diphosphate from 1-deoxy-D-xylulose 5-phosphate: step 1/6. Its function is as follows. Catalyzes the NADPH-dependent rearrangement and reduction of 1-deoxy-D-xylulose-5-phosphate (DXP) to 2-C-methyl-D-erythritol 4-phosphate (MEP). This chain is 1-deoxy-D-xylulose 5-phosphate reductoisomerase, found in Cyanothece sp. (strain PCC 7425 / ATCC 29141).